Consider the following 781-residue polypeptide: Potassium transporter 5 (781 aa).

Residues 1-11 (MTEPLHTSSNG) show a composition bias toward polar residues. Positions 1-24 (MTEPLHTSSNGGAERGPNAAFESE) are disordered. Topologically, residues 1-63 (MTEPLHTSSN…AKVGWATTLH (63 aa)) are cytoplasmic. Residues 64–84 (LAFQSIGVVYGDMGTSPLYVF) traverse the membrane as a helical segment. The Extracellular portion of the chain corresponds to 85–100 (SSTFTNGIKDTNDILG). A helical transmembrane segment spans residues 101-121 (VMSLIIYTVVLLPLIKYCFIV). The Cytoplasmic portion of the chain corresponds to 122 to 187 (LRANDNGDGG…EKMENSPNFK (66 aa)). Residues 188–208 (IILFLVTILATSMVIGDGVLT) traverse the membrane as a helical segment. Residues 209–225 (PCISVLSAVGGIKESAK) are Extracellular-facing. The helical transmembrane segment at 226–246 (SLTQGQIAGIAIAILIVLFLV) threads the bilayer. Topologically, residues 247–257 (QRFGTDKVGYS) are cytoplasmic. Residues 258 to 278 (FGPIILTWFIFIAGTGVYNLF) form a helical membrane-spanning segment. Topologically, residues 279 to 304 (KHDTGVLKAFNPKYIVDYFERNGKQG) are extracellular. Residues 305-325 (WISLGGVILCITGTEAMFADL) traverse the membrane as a helical segment. Residues 326–334 (GHFNVRAIQ) are Cytoplasmic-facing. A helical membrane pass occupies residues 335 to 355 (IGFSVVLLPSVLLAYIGQAAY). Residues 356–381 (LRIYPEHVADTFYKSIPDPLYWPTFV) are Extracellular-facing. Residues 382–402 (VAVAAAIIASQAMISGAFAII) traverse the membrane as a helical segment. Residues 403–426 (AQSQILGCFPRVRVIHTSTKFHGQ) are Cytoplasmic-facing. A helical transmembrane segment spans residues 427–447 (VYIPEINYVLMVLCVAVTAIF). At 448 to 458 (QTTDKIGNAYG) the chain is on the extracellular side. A helical membrane pass occupies residues 459-479 (IAVVFVMFITTLLVTLVMVMI). The Cytoplasmic portion of the chain corresponds to 480-481 (WK). The helical transmembrane segment at 482–502 (TSLLWIALFPVIFGGAELIYL) threads the bilayer. Residues 503 to 512 (SSAFYKFTQG) lie on the Extracellular side of the membrane. The helical transmembrane segment at 513 to 533 (GYLPLVFSAILMFIMATWHYV) threads the bilayer. Topologically, residues 534 to 781 (HVHRYKYELR…LLRVGMTYEI (248 aa)) are cytoplasmic. Residues 681–707 (VTDPTSEVQDAMSSRNNSDQHTTEPRN) are disordered. A compositionally biased stretch (polar residues) spans 683–700 (DPTSEVQDAMSSRNNSDQ).

It belongs to the HAK/KUP transporter (TC 2.A.72.3) family. As to expression, expressed in root epidermis, parenchyma of stele tissue and primordial of the lateral root, root-shoot junctions and leaf sheaths. Expressed in germinated embryonic tissue, young tillers, flower organs and pedicels.

It localises to the cell membrane. The enzyme catalyses K(+)(in) = K(+)(out). In terms of biological role, high-affinity potassium transporter. Its potassium transporter activity does not seem to be affected by high sodium and low potassium concentrations in the extracellular environment. Invloved in salt stress tolerance by enhancing root potassium uptake and translocation to the shoot to prevent sodium influx during salt stress. Involved in the positive regulation of disease resistance against the rice grassy stunt virus by promoting potassium transport and increasing endogenous plant potassium. This is Potassium transporter 5 (HAK5) from Oryza sativa subsp. japonica (Rice).